A 532-amino-acid chain; its full sequence is Purple acid phosphatase 15 (532 aa).

The first 19 residues, 1-19 (MTFLLLLLFCFLSPAISSA), serve as a signal peptide directing secretion. Residue N136 is glycosylated (N-linked (GlcNAc...) asparagine). Residue D194 participates in Fe cation binding. N-linked (GlcNAc...) asparagine glycosylation occurs at N200. Positions 221 and 224 each coordinate Fe cation. Zn(2+) is bound at residue D221. N231 and N264 each carry an N-linked (GlcNAc...) asparagine glycan. N277 provides a ligand contact to Zn(2+). N277 is a substrate binding site. 2 N-linked (GlcNAc...) asparagine glycosylation sites follow: N286 and N301. Residue H359 coordinates Zn(2+). Catalysis depends on H369, which acts as the Proton donor. H396 contacts Zn(2+). Substrate is bound at residue 396–398 (HVH). Residue H398 participates in Fe cation binding. N491 is a glycosylation site (N-linked (GlcNAc...) asparagine).

The protein belongs to the metallophosphoesterase superfamily. Purple acid phosphatase family. Homodimer. Requires Fe cation as cofactor. The cofactor is Zn(2+). In terms of tissue distribution, expressed in roots, stems, cotyledons, leaves, flowers and siliques.

The protein localises to the secreted. The catalysed reaction is 1D-myo-inositol hexakisphosphate + H2O = 1D-myo-inositol 1,2,3,5,6-pentakisphosphate + phosphate. It carries out the reaction a phosphate monoester + H2O = an alcohol + phosphate. Its function is as follows. Acid phosphatase activity with p-nitrophenyl phosphate (pNPP), D-myoinositol 1-phosphate (Ins(1)P1), phytic acid and Myo-inositol hexakisphosphate. Low or no activity with Glc-6-P and ATP. Confers shoot growth stimulation, enhanced salt and osmotic stress tolerance, and ABA insensitivity. May modulate ascorbic acid (AsA) levels by controlling the input of myoinositol into this branch of AsA biosynthesis. The chain is Purple acid phosphatase 15 (PAP15) from Arabidopsis thaliana (Mouse-ear cress).